The sequence spans 371 residues: Protein-tyrosine sulfotransferase 2 (371 aa).

Residues 1–8 (MRVTMRRV) are Cytoplasmic-facing. The chain crosses the membrane as a helical; Signal-anchor for type II membrane protein span at residues 9–25 (LLAVGSVVALMVTLHLG). Residues 26-371 (QQVLECQHVL…QVTQNTSSSH (346 aa)) are Lumenal-facing. 76-80 (RSGTT) is a binding site for 3'-phosphoadenylyl sulfate. Residues Cys-94 and Cys-154 are joined by a disulfide bond. The active-site Proton donor/acceptor is Glu-97. An interaction with peptide substrate region spans residues 99–103 (RIIPR). Residues Arg-181, Ser-189, and Arg-193 each contribute to the 3'-phosphoadenylyl sulfate site. Cys-223 and Cys-231 are joined by a disulfide. 3'-phosphoadenylyl sulfate-binding positions include Tyr-236, 283–292 (STDQVIKPVN), and Lys-298. N-linked (GlcNAc...) asparagine glycans are attached at residues Asn-341 and Asn-366.

This sequence belongs to the protein sulfotransferase family.

It localises to the golgi apparatus membrane. It carries out the reaction L-tyrosyl-[protein] + 3'-phosphoadenylyl sulfate = O-sulfo-L-tyrosine-[protein] + adenosine 3',5'-bisphosphate + H(+). Functionally, catalyzes the O-sulfation of tyrosine residues within acidic motifs of polypeptides, using 3'-phosphoadenylyl sulfate (PAPS) as cosubstrate. The polypeptide is Protein-tyrosine sulfotransferase 2 (TPST2) (Gallus gallus (Chicken)).